Here is a 261-residue protein sequence, read N- to C-terminus: MWFLILFPALSLGGIDAAPPLQSRVVGGFNCEKNSQPWQVAVYYQKEHICGGVLLDRNWVLTAAHCYVDQYEVWLGKNKLFQEEPSAQHRLVSKSFPHPGFNMSLLMLQTTPPGADFSNDLMLLRLSKPADITDVVKPIALPTKEPKPGSTCLASGWGSITPTRWQKSDDLQCVFITLLPNENCAKVYLQKVTDVMLCAGEMGGGKDTCAGDSGGPLICDGILQGTTSNGPEPCGKPGVPAIYTNLIKFNSWIKDTMMKNA.

The signal sequence occupies residues 1–18; the sequence is MWFLILFPALSLGGIDAA. Residues 19–24 constitute a propeptide, activation peptide; the sequence is PPLQSR. The region spanning 25–258 is the Peptidase S1 domain; that stretch reads VVGGFNCEKN…FNSWIKDTMM (234 aa). 5 disulfides stabilise this stretch: Cys-31–Cys-173, Cys-50–Cys-66, Cys-152–Cys-219, Cys-184–Cys-198, and Cys-209–Cys-234. His-65 acts as the Charge relay system in catalysis. Asn-102 carries an N-linked (GlcNAc...) asparagine glycan. Asp-120 functions as the Charge relay system in the catalytic mechanism. Ser-213 serves as the catalytic Charge relay system.

It belongs to the peptidase S1 family. Kallikrein subfamily.

The enzyme catalyses Preferential cleavage of Arg-|-Xaa bonds in small molecule substrates. Highly selective action to release kallidin (lysyl-bradykinin) from kininogen involves hydrolysis of Met-|-Xaa or Leu-|-Xaa.. Functionally, glandular kallikreins cleave Met-Lys and Arg-Ser bonds in kininogen to release Lys-bradykinin. In terms of biological role, prorenin-converting enzyme cleaves mouse REN-2 prorenin at a dibasic site to yield mature renin. In Mus musculus (Mouse), this protein is Kallikrein 1-related peptidase b26 (Klk1b26).